The following is a 144-amino-acid chain: Putative pre-16S rRNA nuclease (144 aa).

Belongs to the YqgF nuclease family.

It localises to the cytoplasm. Its function is as follows. Could be a nuclease involved in processing of the 5'-end of pre-16S rRNA. This is Putative pre-16S rRNA nuclease from Mycoplasma mobile (strain ATCC 43663 / 163K / NCTC 11711) (Mesomycoplasma mobile).